Consider the following 206-residue polypeptide: Protein GrpE (206 aa).

The span at 1-17 (MSNESIKAEQDLIHEGV) shows a compositional bias: basic and acidic residues. A disordered region spans residues 1 to 20 (MSNESIKAEQDLIHEGVESE).

It belongs to the GrpE family. In terms of assembly, homodimer.

The protein localises to the cytoplasm. In terms of biological role, participates actively in the response to hyperosmotic and heat shock by preventing the aggregation of stress-denatured proteins, in association with DnaK and GrpE. It is the nucleotide exchange factor for DnaK and may function as a thermosensor. Unfolded proteins bind initially to DnaJ; upon interaction with the DnaJ-bound protein, DnaK hydrolyzes its bound ATP, resulting in the formation of a stable complex. GrpE releases ADP from DnaK; ATP binding to DnaK triggers the release of the substrate protein, thus completing the reaction cycle. Several rounds of ATP-dependent interactions between DnaJ, DnaK and GrpE are required for fully efficient folding. This is Protein GrpE from Shewanella oneidensis (strain ATCC 700550 / JCM 31522 / CIP 106686 / LMG 19005 / NCIMB 14063 / MR-1).